Reading from the N-terminus, the 36-residue chain is U4-ctenitoxin-Pr1a (36 aa).

Intrachain disulfides connect Cys3–Cys17, Cys10–Cys22, and Cys16–Cys34.

In terms of tissue distribution, expressed by the venom gland.

The protein localises to the secreted. Its function is as follows. Neurotoxin. Causes spastic paralysis and death in mice. Moderate inhibitor of L-type calcium channels (Cav1/CACNA1). The chain is U4-ctenitoxin-Pr1a from Phoneutria reidyi (Brazilian Amazonian armed spider).